Reading from the N-terminus, the 336-residue chain is Aspartate--ammonia ligase (336 aa).

This sequence belongs to the class-II aminoacyl-tRNA synthetase family. AsnA subfamily.

It localises to the cytoplasm. It catalyses the reaction L-aspartate + NH4(+) + ATP = L-asparagine + AMP + diphosphate + H(+). It functions in the pathway amino-acid biosynthesis; L-asparagine biosynthesis; L-asparagine from L-aspartate (ammonia route): step 1/1. This Ligilactobacillus salivarius (strain UCC118) (Lactobacillus salivarius) protein is Aspartate--ammonia ligase.